The sequence spans 518 residues: Golgi-associated olfactory signaling regulator (518 aa).

The first 19 residues, 1–19 (MKSFSRILFLVFLLAGLRS), serve as a signal peptide directing secretion. Topologically, residues 20–409 (KAAPSAPLPL…GRPRGAAGGA (390 aa)) are extracellular. Residues 38–377 (HPSETSPLKG…ATLRAPQRHS (340 aa)) form a disordered region. Basic and acidic residues predominate over residues 92–106 (DLRETPHPESPETPK). The N-linked (GlcNAc...) asparagine glycan is linked to Asn-124. The segment covering 138-153 (TPGPTEMPHPGSPETP) has biased composition (pro residues). N-linked (GlcNAc...) asparagine glycosylation is present at Asn-156. Composition is skewed to polar residues over residues 168-180 (TPNT…TPQE) and 187-207 (LNAT…NPTK). N-linked (GlcNAc...) asparagine glycans are attached at residues Asn-188 and Asn-220. Basic and acidic residues-rich tracts occupy residues 209 to 220 (PDPKSPEKHDLN) and 236 to 247 (DPSKTPHPESHV). Composition is skewed to polar residues over residues 248 to 270 (THNP…QNAT) and 276 to 285 (SDPQISTSLY). A glycan (N-linked (GlcNAc...) asparagine) is linked at Asn-268. A helical membrane pass occupies residues 410 to 430 (LCLFFAGTALLIGIFVLLWCL). The Cytoplasmic portion of the chain corresponds to 431–518 (YRRAARQRPF…SPATLPNNFV (88 aa)). A disordered region spans residues 477–518 (HIATKQPPPTPPLPPKLPPPPRGGRPQRLEALSPATLPNNFV). Residues 482 to 499 (QPPPTPPLPPKLPPPPRG) are compositionally biased toward pro residues.

The protein resides in the golgi apparatus membrane. Required for proper function of the olfactory system. May be involved in establishing the acuity of olfactory sensory signaling. This Homo sapiens (Human) protein is Golgi-associated olfactory signaling regulator (GFY).